A 205-amino-acid chain; its full sequence is Protein PYRAB00100 (205 aa).

Positions 7–201 (EWGEFLVRLA…EEYPRGPVRR (195 aa)) constitute an AMMECR1 domain.

The sequence is that of Protein PYRAB00100 from Pyrococcus abyssi (strain GE5 / Orsay).